A 283-amino-acid polypeptide reads, in one-letter code: Bifunctional protein FolD (283 aa).

NADP(+)-binding positions include 166–168 (GRS), Ser-191, and Thr-232.

It belongs to the tetrahydrofolate dehydrogenase/cyclohydrolase family. As to quaternary structure, homodimer.

It catalyses the reaction (6R)-5,10-methylene-5,6,7,8-tetrahydrofolate + NADP(+) = (6R)-5,10-methenyltetrahydrofolate + NADPH. It carries out the reaction (6R)-5,10-methenyltetrahydrofolate + H2O = (6R)-10-formyltetrahydrofolate + H(+). It participates in one-carbon metabolism; tetrahydrofolate interconversion. Catalyzes the oxidation of 5,10-methylenetetrahydrofolate to 5,10-methenyltetrahydrofolate and then the hydrolysis of 5,10-methenyltetrahydrofolate to 10-formyltetrahydrofolate. This is Bifunctional protein FolD from Halothermothrix orenii (strain H 168 / OCM 544 / DSM 9562).